The primary structure comprises 96 residues: uncharacterized protein (96 aa).

Residues 38 to 91 (IEQLRKGTGLKIDDFARVLGVSVAMVKEWESRRVKPSSAELKLMRLIQANPALS) enclose the HTH cro/C1-type domain. Positions 49 to 68 (IDDFARVLGVSVAMVKEWES) form a DNA-binding region, H-T-H motif.

This is an uncharacterized protein from Escherichia coli O157:H7.